The following is a 98-amino-acid chain: N(2)-fixation sustaining protein CowN (98 aa).

This sequence belongs to the CowN family.

Functionally, is required to sustain N(2)-dependent growth in the presence of low levels of carbon monoxide (CO). Probably acts by protecting the N(2) fixation ability of the nitrogenase complex, which is inactivated in the presence of CO. The protein is N(2)-fixation sustaining protein CowN of Dechloromonas aromatica (strain RCB).